The following is a 381-amino-acid chain: Spermidine/putrescine import ATP-binding protein PotA (381 aa).

The ABC transporter domain occupies 19-249; sequence VELRKVFKVF…PESPFVADFI (231 aa). Residue 51–58 participates in ATP binding; it reads GPSGCGKT.

The protein belongs to the ABC transporter superfamily. Spermidine/putrescine importer (TC 3.A.1.11.1) family. In terms of assembly, the complex is composed of two ATP-binding proteins (PotA), two transmembrane proteins (PotB and PotC) and a solute-binding protein (PotD).

The protein resides in the cell inner membrane. It carries out the reaction ATP + H2O + polyamine-[polyamine-binding protein]Side 1 = ADP + phosphate + polyamineSide 2 + [polyamine-binding protein]Side 1.. Its function is as follows. Part of the ABC transporter complex PotABCD involved in spermidine/putrescine import. Responsible for energy coupling to the transport system. In Trichodesmium erythraeum (strain IMS101), this protein is Spermidine/putrescine import ATP-binding protein PotA.